We begin with the raw amino-acid sequence, 88 residues long: Large ribosomal subunit protein bL27 (88 aa).

Positions 1–24 are disordered; sequence MATKKSGGSSGNGRDSRGRRLGVK.

It belongs to the bacterial ribosomal protein bL27 family.

This Ehrlichia chaffeensis (strain ATCC CRL-10679 / Arkansas) protein is Large ribosomal subunit protein bL27.